Consider the following 549-residue polypeptide: Chaperonin GroEL (549 aa).

ATP is bound by residues 29 to 32 (TLGP), Lys-50, 86 to 90 (DGTTT), Gly-414, 477 to 479 (NAA), and Asp-493.

This sequence belongs to the chaperonin (HSP60) family. As to quaternary structure, forms a cylinder of 14 subunits composed of two heptameric rings stacked back-to-back. Interacts with the co-chaperonin GroES.

The protein resides in the cytoplasm. The enzyme catalyses ATP + H2O + a folded polypeptide = ADP + phosphate + an unfolded polypeptide.. Functionally, together with its co-chaperonin GroES, plays an essential role in assisting protein folding. The GroEL-GroES system forms a nano-cage that allows encapsulation of the non-native substrate proteins and provides a physical environment optimized to promote and accelerate protein folding. In Geotalea uraniireducens (strain Rf4) (Geobacter uraniireducens), this protein is Chaperonin GroEL.